Reading from the N-terminus, the 182-residue chain is Adenine phosphoribosyltransferase (182 aa).

Residue 133–137 (ATGGS) participates in AMP binding.

It belongs to the purine/pyrimidine phosphoribosyltransferase family. As to quaternary structure, homodimer. The cofactor is Mg(2+).

The protein resides in the cytoplasm. It localises to the nucleus. It carries out the reaction AMP + diphosphate = 5-phospho-alpha-D-ribose 1-diphosphate + adenine. The protein operates within purine metabolism; AMP biosynthesis via salvage pathway; AMP from adenine: step 1/1. Catalyzes a salvage reaction resulting in the formation of AMP, that is energically less costly than de novo synthesis. The polypeptide is Adenine phosphoribosyltransferase (APT1) (Yarrowia lipolytica (strain CLIB 122 / E 150) (Yeast)).